The sequence spans 320 residues: Biotin synthase (320 aa).

Positions 39–267 (NAIQLATLLS…KARVRLSAGR (229 aa)) constitute a Radical SAM core domain. Positions 54, 58, and 61 each coordinate [4Fe-4S] cluster. [2Fe-2S] cluster is bound by residues cysteine 98, cysteine 130, cysteine 190, and arginine 262.

The protein belongs to the radical SAM superfamily. Biotin synthase family. In terms of assembly, homodimer. It depends on [4Fe-4S] cluster as a cofactor. [2Fe-2S] cluster serves as cofactor.

It catalyses the reaction (4R,5S)-dethiobiotin + (sulfur carrier)-SH + 2 reduced [2Fe-2S]-[ferredoxin] + 2 S-adenosyl-L-methionine = (sulfur carrier)-H + biotin + 2 5'-deoxyadenosine + 2 L-methionine + 2 oxidized [2Fe-2S]-[ferredoxin]. Its pathway is cofactor biosynthesis; biotin biosynthesis; biotin from 7,8-diaminononanoate: step 2/2. In terms of biological role, catalyzes the conversion of dethiobiotin (DTB) to biotin by the insertion of a sulfur atom into dethiobiotin via a radical-based mechanism. This is Biotin synthase from Synechococcus elongatus (strain ATCC 33912 / PCC 7942 / FACHB-805) (Anacystis nidulans R2).